The following is a 218-amino-acid chain: Non-structural protein NP-1 (218 aa).

Disordered regions lie at residues 1-89 (MSSG…RTNP) and 195-218 (TESEEITDEEMLSAAESMETDASN). Basic residues-rich tracts occupy residues 8 to 18 (DKHRAYKRKGS) and 27 to 40 (PWQPHHRSRSRSPI). Residues 58–67 (SHLSSCTASK) show a composition bias toward polar residues. Basic and acidic residues predominate over residues 73–86 (TKTKENTSGKRDSR). Residues 196–205 (ESEEITDEEM) are compositionally biased toward acidic residues.

The protein belongs to the Bocaparvovirus Non-structural protein NP-1 family.

It is found in the host nucleus. Its function is as follows. Required for the expression of the capsid proteins. Performs the splicing and internal polyadenylation of the viral capsid-encoding mRNA precursor, which allows its maturation and expression. Transactivates the viral promoter. In Human bocavirus 3 (HBoV3), this protein is Non-structural protein NP-1 (NP1).